The primary structure comprises 193 residues: dCTP deaminase (193 aa).

DCTP is bound by residues 110–115 (RSSLAR), D128, 136–138 (VLE), Y171, K178, and Q182. E138 serves as the catalytic Proton donor/acceptor. The interval 173 to 193 (KRKNAKYKDQQDAVASRISQD) is disordered.

Belongs to the dCTP deaminase family. Homotrimer.

It carries out the reaction dCTP + H2O + H(+) = dUTP + NH4(+). It functions in the pathway pyrimidine metabolism; dUMP biosynthesis; dUMP from dCTP (dUTP route): step 1/2. Catalyzes the deamination of dCTP to dUTP. In Shewanella sp. (strain ANA-3), this protein is dCTP deaminase.